The chain runs to 252 residues: H-2 class II histocompatibility antigen, A-F beta chain (252 aa).

Residues 1–16 (AAVVVLMVLSSPGTEG) form the signal peptide. A beta-1 region spans residues 17–109 (GNSERHFVSQ…VETPTSLRRL (93 aa)). At 17–213 (GNSERHFVSQ…RAQSESARSK (197 aa)) the chain is on the extracellular side. Intrachain disulfides connect Cys-31–Cys-93 and Cys-132–Cys-188. Asn-35 carries N-linked (GlcNAc...) asparagine glycosylation. The segment at 110 to 203 (EQPNVVISLS…SLKSPITVEW (94 aa)) is beta-2. Positions 112-200 (PNVVISLSRT…EHPSLKSPIT (89 aa)) constitute an Ig-like C1-type domain. The segment at 204-213 (RAQSESARSK) is connecting peptide. Residues 214 to 234 (MLSGIGGCVLGVIFLGLGLFI) traverse the membrane as a helical segment. Topologically, residues 235–252 (RYRSQKGPRGPPPAGLLQ) are cytoplasmic.

It belongs to the MHC class II family. In terms of processing, ubiquitinated in immature dendritic cells leading to down-regulation of MHC class II.

The protein resides in the membrane. In Mus musculus (Mouse), this protein is H-2 class II histocompatibility antigen, A-F beta chain (H2-Ab1).